The chain runs to 461 residues: Phosphatidate cytidylyltransferase 1 (461 aa).

A disordered region spans residues 1–68 (MLELRHRGGC…PEVPPSSDRT (68 aa)). R7 is modified (omega-N-methylarginine). Residues 22–56 (REGEAAGGDHETESTSDKETDIDDRYGDLDARGDS) are compositionally biased toward basic and acidic residues. Phosphoserine is present on residues S35 and S37. 6 helical membrane passes run 96-116 (MISL…LLVL), 149-169 (FLLC…FATF), 183-203 (HRFI…LSLV), 230-250 (LVIQ…SSVI), 279-299 (GFIG…YVLS), and 357-377 (IALS…ASGF).

It belongs to the CDS family. As to quaternary structure, homodimer. Interacts with FOS; this interaction may enhance catalytic activity. The cofactor is Mg(2+). In terms of tissue distribution, brain, retina and testis. Found in cerebellar Purkinje cells, pineal body, inner segment of photoreceptor cells and postmitotic spermatocytes and spermatids.

The protein resides in the endoplasmic reticulum membrane. The catalysed reaction is a 1,2-diacyl-sn-glycero-3-phosphate + CTP + H(+) = a CDP-1,2-diacyl-sn-glycerol + diphosphate. It carries out the reaction 1-octadecanoyl-2-(5Z,8Z,11Z,14Z-eicosatetraenoyl)-sn-glycero-3-phosphate + CTP + H(+) = 1-octadecanoyl-2-(5Z,8Z,11Z,14Z-eicosatetraenoyl)-sn-glycero-3-cytidine-5'-diphosphate + diphosphate. It catalyses the reaction 1-octadecanoyl-2-(9Z,12Z-octadecadienoyl)-sn-glycero-3-phosphate + CTP + H(+) = 1-octadecanoyl-2-(9Z,12Z-octadecadienoyl)-sn-glycero-3-cytidine-5'-diphosphate + diphosphate. The enzyme catalyses 1-hexadecanoyl-2-(5Z,8Z,11Z,14Z-eicosatetraenoyl)-sn-glycero-3-phosphate + CTP + H(+) = 1-hexadecanoyl-2-(5Z,8Z,11Z,14Z-eicosatetraenoyl)-sn-glycero-3-cytidine-5'-diphosphate + diphosphate. The catalysed reaction is 1,2-di-(5Z,8Z,11Z,14Z)-eicosatetraenoyl-sn-glycero-3-phosphate + CTP + H(+) = 1,2-di-(5Z,8Z,11Z,14Z-eicosatetraenoyl)-sn-glycero-3-cytidine-5'-diphosphate + diphosphate. It carries out the reaction 1-octadecanoyl-2-(9Z-octadecenoyl)-sn-glycero-3-phosphate + CTP + H(+) = 1-octadecanoyl-2-(9Z-octadecenoyl)-sn-glycero-3-cytidine-5'-diphosphate + diphosphate. It catalyses the reaction 1-octadecanoyl-2-(4Z,7Z,10Z,13Z,16Z,19Z-docosahexaenoyl)-sn-glycero-3-phosphate + CTP + H(+) = 1-octadecanoyl-2-(4Z,7Z,10Z,13Z,16Z,19Z-docosahexaenoyl)-sn-glycero-3-cytidine-5'-diphosphate + diphosphate. The enzyme catalyses 1,2-di-(9Z,12Z-octadecadienoyl)-sn-glycero-3-phosphate + CTP + H(+) = 1,2-di-(9Z,12Z-octadecadienoyl)-sn-glycero-3-cytidine-5'-diphosphate + diphosphate. The catalysed reaction is 1,2-di-(9Z-octadecenoyl)-sn-glycero-3-phosphate + CTP + H(+) = 1,2-di-(9Z-octadecenoyl)-sn-glycero-3-cytidine-5'-diphosphate + diphosphate. The protein operates within phospholipid metabolism; CDP-diacylglycerol biosynthesis; CDP-diacylglycerol from sn-glycerol 3-phosphate: step 3/3. Its activity is regulated as follows. Activated by GTP. Inhibited by CDP-diacylglycerol and by phosphatidylglycerol 4,5-bisphosphate (PPI2). Its function is as follows. Catalyzes the conversion of phosphatidic acid (PA) to CDP-diacylglycerol (CDP-DAG), an essential intermediate in the synthesis of phosphatidylglycerol, cardiolipin and phosphatidylinositol. Exhibits almost no acyl chain preference for PA, showing no discrimination for the sn-1/sn-2 acyl chain composition of PAs. Plays an important role in regulatinng the growth of lipid droplets which are storage organelles at the center of lipid and energy homeostasis. Positively regulates the differentiation and development of adipocytes. The chain is Phosphatidate cytidylyltransferase 1 from Rattus norvegicus (Rat).